The sequence spans 429 residues: Transcriptional coactivator AacuS (429 aa).

The HTH iclR-type domain maps to 80–144; the sequence is MASQTQLLAC…GFLQEPELGH (65 aa). Residues 110–129 constitute a DNA-binding region (H-T-H motif); that stretch reads IKDVAELIGVPENHICRIVR.

It is found in the nucleus. Transcriptional coactivator; part of the gene cluster that mediates the biosynthesis of the tetrahydroxanthone dimer secalonic acid D. The sequence is that of Transcriptional coactivator AacuS from Aspergillus aculeatus (strain ATCC 16872 / CBS 172.66 / WB 5094).